We begin with the raw amino-acid sequence, 54 residues long: MLYYALVFLVVALVAGALGFGGIAGASAGIAQILFFVFLALLVISLIASAIRKA.

Transmembrane regions (helical) follow at residues 5–25 (ALVF…GIAG) and 29–48 (GIAQ…SLIA).

Belongs to the UPF0391 family.

It is found in the cell membrane. The sequence is that of UPF0391 membrane protein Oant_1245 from Brucella anthropi (strain ATCC 49188 / DSM 6882 / CCUG 24695 / JCM 21032 / LMG 3331 / NBRC 15819 / NCTC 12168 / Alc 37) (Ochrobactrum anthropi).